The sequence spans 375 residues: Holliday junction branch migration complex subunit RuvB (375 aa).

Positions 1–50 (MAIVSSKSPDPAERRSQAKTKPSVSEPQDSLVRPQAAPEESQRPEDQIRP) are disordered. A large ATPase domain (RuvB-L) region spans residues 13-209 (ERRSQAKTKP…FGLVQRLRFY (197 aa)). Residues 19-28 (KTKPSVSEPQ) are compositionally biased toward polar residues. Residues 40–49 (ESQRPEDQIR) are compositionally biased toward basic and acidic residues. Residues Ile-48, Arg-49, Gly-90, Lys-93, Thr-94, Thr-95, 156 to 158 (EDF), Arg-199, Tyr-209, and Arg-246 contribute to the ATP site. Thr-94 serves as a coordination point for Mg(2+). The segment at 210-280 (EVEALTDIVQ…IAATALELYN (71 aa)) is small ATPAse domain (RuvB-S). The segment at 283–375 (PCGLDWTDRR…LQQLLTEPET (93 aa)) is head domain (RuvB-H). DNA is bound by residues Arg-338 and Arg-343.

The protein belongs to the RuvB family. As to quaternary structure, homohexamer. Forms an RuvA(8)-RuvB(12)-Holliday junction (HJ) complex. HJ DNA is sandwiched between 2 RuvA tetramers; dsDNA enters through RuvA and exits via RuvB. An RuvB hexamer assembles on each DNA strand where it exits the tetramer. Each RuvB hexamer is contacted by two RuvA subunits (via domain III) on 2 adjacent RuvB subunits; this complex drives branch migration. In the full resolvosome a probable DNA-RuvA(4)-RuvB(12)-RuvC(2) complex forms which resolves the HJ.

The protein localises to the cytoplasm. The enzyme catalyses ATP + H2O = ADP + phosphate + H(+). The RuvA-RuvB-RuvC complex processes Holliday junction (HJ) DNA during genetic recombination and DNA repair, while the RuvA-RuvB complex plays an important role in the rescue of blocked DNA replication forks via replication fork reversal (RFR). RuvA specifically binds to HJ cruciform DNA, conferring on it an open structure. The RuvB hexamer acts as an ATP-dependent pump, pulling dsDNA into and through the RuvAB complex. RuvB forms 2 homohexamers on either side of HJ DNA bound by 1 or 2 RuvA tetramers; 4 subunits per hexamer contact DNA at a time. Coordinated motions by a converter formed by DNA-disengaged RuvB subunits stimulates ATP hydrolysis and nucleotide exchange. Immobilization of the converter enables RuvB to convert the ATP-contained energy into a lever motion, pulling 2 nucleotides of DNA out of the RuvA tetramer per ATP hydrolyzed, thus driving DNA branch migration. The RuvB motors rotate together with the DNA substrate, which together with the progressing nucleotide cycle form the mechanistic basis for DNA recombination by continuous HJ branch migration. Branch migration allows RuvC to scan DNA until it finds its consensus sequence, where it cleaves and resolves cruciform DNA. In Synechococcus elongatus (strain ATCC 33912 / PCC 7942 / FACHB-805) (Anacystis nidulans R2), this protein is Holliday junction branch migration complex subunit RuvB.